Consider the following 1175-residue polypeptide: Potassium/sodium hyperpolarization-activated cyclic nucleotide-gated channel 4 (1175 aa).

Topologically, residues 1-259 are cytoplasmic; the sequence is MDKLPPSMRK…SAGFWIIHPY (259 aa). A disordered region spans residues 17–186; sequence QQVGAKAWIM…SSCGEQRPAD (170 aa). Residues 26 to 36 show a composition bias toward acidic residues; the sequence is MDEEEDAEEEG. Residues 60–75 show a composition bias toward low complexity; that stretch reads PSAAAAAAGGAESRGA. The span at 111 to 126 shows a compositional bias: gly residues; the sequence is SRGGGGGGGSTGGGSH. A compositionally biased stretch (basic and acidic residues) spans 128 to 140; sequence HLHDSAEERRLIA. Phosphoserine is present on Ser145. The segment covering 162–175 has biased composition (pro residues); that stretch reads PGAPAPPAASPPQV. A helical transmembrane segment spans residues 260–288; that stretch reads SDFRFYWDLTMLLLMVGNLIIIPVGITFF. Over 289–292 the chain is Extracellular; sequence KDEN. Residues 293–316 traverse the membrane as a helical segment; sequence TTPWIVFNVVSDTFFLIDLVLNFR. At 317-329 the chain is on the cytoplasmic side; it reads TGIVVEDNTDIIL. The chain crosses the membrane as a helical span at residues 330–352; that stretch reads DPRRIKMKYLKSWFVVDFVSSIP. The Extracellular portion of the chain corresponds to 353–374; it reads VDYIFLIVETRIDSEVYKTARA. The helical; Voltage-sensor transmembrane segment at 375-410 threads the bilayer; the sequence is LRIVRFTKILSLLRLLRLSRLIRYIHQWEEIFHMTY. Topologically, residues 411–413 are cytoplasmic; that stretch reads DLA. The helical transmembrane segment at 414–444 threads the bilayer; that stretch reads SAVVRIVNLIGMMLLLCHWDGCLQFLVPMLQ. At 445 to 449 the chain is on the extracellular side; it reads DFPDD. The pore-forming intramembrane region spans 450–478; it reads CWVSLNNMVNNSWGKQYSYALFKAMSHML. Residues 479–488 are Extracellular-facing; that stretch reads CIGYGRQAPM. Residues 489-521 traverse the membrane as a helical segment; sequence GMSDVWLTMLSMIVGATCYAMFIGHATALIQSL. Residues 522–1175 are Cytoplasmic-facing; the sequence is DSSRRQYQEK…PVRSKLPSNL (654 aa). 4 residues coordinate 3',5'-cyclic GMP: Tyr560, Lys563, Phe565, and Glu567. Positions 660, 661, 663, 670, 671, 674, and 711 each coordinate 3',5'-cyclic AMP. Disordered regions lie at residues 801 to 820 and 830 to 1175; these read AIFR…AGQT and LAPS…PSNL. Composition is skewed to low complexity over residues 839 to 854, 900 to 912, 948 to 966, and 984 to 1004; these read SPAS…SSAS, LGGS…SPLL, SPTS…LSPG, and RLPF…SPRG. A compositionally biased stretch (pro residues) spans 1038 to 1050; it reads ASSPPPPPPPPAP. Phosphoserine is present on residues Ser1089 and Ser1093. Positions 1102–1114 are enriched in pro residues; the sequence is PPFPRAPGRPPGA.

Belongs to the potassium channel HCN family. Homotetramer. The channel is composed of a homo- or heterotetrameric complex of pore-forming subunits. Interacts with PEX5L with a 4:4 HCN4:PEX5L stoichiometry; reduces the effects of cAMP on the voltage-dependence and rate of activation. Interacts with IRAG1; regulates HCN4 channel activity. Interacts with IRAG2; regulates HCN4 channel activity. Post-translationally, S-palmitoylated. As to expression, highly expressed in the heart sinoatrial node (SAN). Not detected in atrium, ventricle, forebrain or cerebellum. Detected at very low levels in total brain.

The protein localises to the cell membrane. The catalysed reaction is K(+)(in) = K(+)(out). It catalyses the reaction Na(+)(in) = Na(+)(out). Activated by cAMP and to a lesser extent by cGMP and cCMP. cAMP binding causes a conformation change that leads to the assembly of an active tetramer and channel opening by shifting the voltage-dependency towards more positive voltages. Binding of cAMP removes a tonic inhibition conferred by cyclic nucleotide-binding domain (CNBD) on channel opening. Cyclic dinucleotides can modulate HCN4 channel; cyclic dinucleotides acting as potent antagonists of cAMP. Inhibited by extracellular Cs(+) ions. Auxiliary subunits can also regulate HCN4 channel. IRAG1 causes a gain-of-function by shifting HCN4 activation to more depolarized membrane potentials in the absence of cAMP. In contrast, IRAG2 causes a loss-of-function by inhibiting cAMP-dependent potentiation of HCN4 activation. In terms of biological role, hyperpolarization-activated ion channel that are permeable to Na(+) and K(+) ions with very slow activation and inactivation. Exhibits higher selectivity for K(+) over Na(+) ions. Contributes to the native pacemaker currents in heart (If) that regulate the rhythm of heart beat. Contributes to the native pacemaker currents in neurons (Ih). May mediate responses to sour stimuli. This is Potassium/sodium hyperpolarization-activated cyclic nucleotide-gated channel 4 (HCN4) from Oryctolagus cuniculus (Rabbit).